Consider the following 301-residue polypeptide: tRNA dimethylallyltransferase (301 aa).

ATP is bound at residue 8–15 (GPTAVGKT). 10–15 (TAVGKT) contributes to the substrate binding site. An interaction with substrate tRNA region spans residues 33–36 (DSRQ).

The protein belongs to the IPP transferase family. Monomer. Requires Mg(2+) as cofactor.

The catalysed reaction is adenosine(37) in tRNA + dimethylallyl diphosphate = N(6)-dimethylallyladenosine(37) in tRNA + diphosphate. Functionally, catalyzes the transfer of a dimethylallyl group onto the adenine at position 37 in tRNAs that read codons beginning with uridine, leading to the formation of N6-(dimethylallyl)adenosine (i(6)A). The chain is tRNA dimethylallyltransferase from Thermosipho africanus (strain TCF52B).